A 552-amino-acid chain; its full sequence is Urocanate hydratase (552 aa).

Residues 50–51, glutamine 128, 174–176, glutamate 194, arginine 199, 261–265, 271–272, and tyrosine 320 each bind NAD(+); these read GG, GMG, QTSAH, and YI. Cysteine 408 is an active-site residue. Glycine 490 contributes to the NAD(+) binding site.

The protein belongs to the urocanase family. NAD(+) is required as a cofactor.

Its subcellular location is the cytoplasm. The enzyme catalyses 4-imidazolone-5-propanoate = trans-urocanate + H2O. The protein operates within amino-acid degradation; L-histidine degradation into L-glutamate; N-formimidoyl-L-glutamate from L-histidine: step 2/3. In terms of biological role, catalyzes the conversion of urocanate to 4-imidazolone-5-propionate. This chain is Urocanate hydratase, found in Bdellovibrio bacteriovorus (strain ATCC 15356 / DSM 50701 / NCIMB 9529 / HD100).